Here is a 345-residue protein sequence, read N- to C-terminus: 3-dehydroquinate synthase (345 aa).

NAD(+) contacts are provided by residues 86-90 (GALLD), 110-111 (TT), Lys-123, and Lys-132. Residues Glu-165, His-229, and His-243 each coordinate Zn(2+).

It belongs to the sugar phosphate cyclases superfamily. Dehydroquinate synthase family. Requires NAD(+) as cofactor. It depends on Co(2+) as a cofactor. The cofactor is Zn(2+).

It is found in the cytoplasm. It carries out the reaction 7-phospho-2-dehydro-3-deoxy-D-arabino-heptonate = 3-dehydroquinate + phosphate. It participates in metabolic intermediate biosynthesis; chorismate biosynthesis; chorismate from D-erythrose 4-phosphate and phosphoenolpyruvate: step 2/7. Catalyzes the conversion of 3-deoxy-D-arabino-heptulosonate 7-phosphate (DAHP) to dehydroquinate (DHQ). This chain is 3-dehydroquinate synthase, found in Pyrobaculum aerophilum (strain ATCC 51768 / DSM 7523 / JCM 9630 / CIP 104966 / NBRC 100827 / IM2).